The chain runs to 440 residues: Serine hydroxymethyltransferase (440 aa).

(6S)-5,6,7,8-tetrahydrofolate is bound by residues Leu-119 and 123–125 (GHL). Lys-228 carries the post-translational modification N6-(pyridoxal phosphate)lysine. 370–372 (SPF) contacts (6S)-5,6,7,8-tetrahydrofolate.

This sequence belongs to the SHMT family. In terms of assembly, homodimer. The cofactor is pyridoxal 5'-phosphate.

It is found in the cytoplasm. It catalyses the reaction (6R)-5,10-methylene-5,6,7,8-tetrahydrofolate + glycine + H2O = (6S)-5,6,7,8-tetrahydrofolate + L-serine. The protein operates within one-carbon metabolism; tetrahydrofolate interconversion. Its pathway is amino-acid biosynthesis; glycine biosynthesis; glycine from L-serine: step 1/1. Catalyzes the reversible interconversion of serine and glycine with tetrahydrofolate (THF) serving as the one-carbon carrier. This reaction serves as the major source of one-carbon groups required for the biosynthesis of purines, thymidylate, methionine, and other important biomolecules. Also exhibits THF-independent aldolase activity toward beta-hydroxyamino acids, producing glycine and aldehydes, via a retro-aldol mechanism. This chain is Serine hydroxymethyltransferase, found in Chlorobaculum tepidum (strain ATCC 49652 / DSM 12025 / NBRC 103806 / TLS) (Chlorobium tepidum).